The following is a 201-amino-acid chain: Large ribosomal subunit protein bL25 (201 aa).

This sequence belongs to the bacterial ribosomal protein bL25 family. CTC subfamily. Part of the 50S ribosomal subunit; part of the 5S rRNA/L5/L18/L25 subcomplex. Contacts the 5S rRNA. Binds to the 5S rRNA independently of L5 and L18.

Functionally, this is one of the proteins that binds to the 5S RNA in the ribosome where it forms part of the central protuberance. This Burkholderia lata (strain ATCC 17760 / DSM 23089 / LMG 22485 / NCIMB 9086 / R18194 / 383) protein is Large ribosomal subunit protein bL25.